The sequence spans 142 residues: Small heat shock protein IbpB (142 aa).

Positions 26–137 constitute a sHSP domain; the sequence is AGEGQSFPPY…AAQRIAISER (112 aa).

This sequence belongs to the small heat shock protein (HSP20) family. In terms of assembly, homodimer. Forms homomultimers of about 100-150 subunits at optimal growth temperatures. Conformation changes to oligomers at high temperatures or high ionic concentrations. The decrease in size of the multimers is accompanied by an increase in chaperone activity.

It is found in the cytoplasm. Associates with aggregated proteins, together with IbpA, to stabilize and protect them from irreversible denaturation and extensive proteolysis during heat shock and oxidative stress. Aggregated proteins bound to the IbpAB complex are more efficiently refolded and reactivated by the ATP-dependent chaperone systems ClpB and DnaK/DnaJ/GrpE. Its activity is ATP-independent. This chain is Small heat shock protein IbpB, found in Shigella boydii serotype 18 (strain CDC 3083-94 / BS512).